We begin with the raw amino-acid sequence, 435 residues long: Serine--tRNA ligase (435 aa).

An L-serine-binding site is contributed by 238-240 (TAE). 269-271 (RAE) contacts ATP. L-serine is bound at residue Glu292. Position 356-359 (356-359 (EISS)) interacts with ATP. An L-serine-binding site is contributed by Ser392.

It belongs to the class-II aminoacyl-tRNA synthetase family. Type-1 seryl-tRNA synthetase subfamily. Homodimer. The tRNA molecule binds across the dimer.

Its subcellular location is the cytoplasm. It catalyses the reaction tRNA(Ser) + L-serine + ATP = L-seryl-tRNA(Ser) + AMP + diphosphate + H(+). The enzyme catalyses tRNA(Sec) + L-serine + ATP = L-seryl-tRNA(Sec) + AMP + diphosphate + H(+). Its pathway is aminoacyl-tRNA biosynthesis; selenocysteinyl-tRNA(Sec) biosynthesis; L-seryl-tRNA(Sec) from L-serine and tRNA(Sec): step 1/1. In terms of biological role, catalyzes the attachment of serine to tRNA(Ser). Is also able to aminoacylate tRNA(Sec) with serine, to form the misacylated tRNA L-seryl-tRNA(Sec), which will be further converted into selenocysteinyl-tRNA(Sec). In Methylobacterium sp. (strain 4-46), this protein is Serine--tRNA ligase.